The sequence spans 328 residues: GMP reductase (328 aa).

Cys-177 acts as the Thioimidate intermediate in catalysis. 206-229 lines the NADP(+) pocket; that stretch reads IVADGGIRYNGDIAKSIRFGASMV.

This sequence belongs to the IMPDH/GMPR family. GuaC type 2 subfamily.

It carries out the reaction IMP + NH4(+) + NADP(+) = GMP + NADPH + 2 H(+). Catalyzes the irreversible NADPH-dependent deamination of GMP to IMP. It functions in the conversion of nucleobase, nucleoside and nucleotide derivatives of G to A nucleotides, and in maintaining the intracellular balance of A and G nucleotides. The protein is GMP reductase of Levilactobacillus brevis (strain ATCC 367 / BCRC 12310 / CIP 105137 / JCM 1170 / LMG 11437 / NCIMB 947 / NCTC 947) (Lactobacillus brevis).